Here is a 487-residue protein sequence, read N- to C-terminus: Glycogen synthase 2 (487 aa).

Lys12 is an ADP-alpha-D-glucose binding site.

It belongs to the glycosyltransferase 1 family. Bacterial/plant glycogen synthase subfamily.

The catalysed reaction is [(1-&gt;4)-alpha-D-glucosyl](n) + ADP-alpha-D-glucose = [(1-&gt;4)-alpha-D-glucosyl](n+1) + ADP + H(+). The protein operates within glycan biosynthesis; glycogen biosynthesis. Synthesizes alpha-1,4-glucan chains using ADP-glucose. This is Glycogen synthase 2 from Methylococcus capsulatus (strain ATCC 33009 / NCIMB 11132 / Bath).